The following is a 73-amino-acid chain: uncharacterized protein (73 aa).

This sequence belongs to the asfivirus I73R family.

The protein resides in the virion. This is an uncharacterized protein from Ornithodoros (relapsing fever ticks).